Here is a 362-residue protein sequence, read N- to C-terminus: Olfactory receptor 5AU1 (362 aa).

The Extracellular portion of the chain corresponds to 1-79; that stretch reads MTEFHLQSQM…TDPQLQRLLF (79 aa). The N-linked (GlcNAc...) asparagine glycan is linked to Asn56. Residues 80-100 form a helical membrane-spanning segment; sequence VVFLGMYTATLLGNLVMFLLI. The Cytoplasmic segment spans residues 101-116; the sequence is HVSATLHTPMYSLLKS. A helical transmembrane segment spans residues 117–139; sequence LSFLDFCYSSTVVPQTLVNFLAK. Over 140 to 150 the chain is Extracellular; the sequence is RKVISYFGCMT. A disulfide bridge links Cys148 with Cys230. A helical transmembrane segment spans residues 151-171; that stretch reads QMFFYAGFATSECYLIAAMAY. The Cytoplasmic segment spans residues 172–194; it reads DRYAAICNPLLYSTIMSPEVCAS. The helical transmembrane segment at 195–215 threads the bilayer; sequence LIVGSYSAGFLNSLIHTGCIF. The Extracellular segment spans residues 216-247; sequence SLKFCGAHVVTHFFCDGPPILSLSCVDTSLCE. Residues 248 to 268 traverse the membrane as a helical segment; sequence ILLFIFAGFNLLSCTLTILIS. Topologically, residues 269-290 are cytoplasmic; sequence YFLILNTILKMSSAQGRFKAFS. Residues 291–311 form a helical membrane-spanning segment; that stretch reads TCASHLTAICLFFGTTLFMYL. The Extracellular portion of the chain corresponds to 312-322; sequence RPRSSYSLTQD. The helical transmembrane segment at 323–343 threads the bilayer; the sequence is RTVAVIYTVVIPVLNPLMYSL. Residues 344-362 are Cytoplasmic-facing; the sequence is RNKDVKKALIKVWGRKTME.

This sequence belongs to the G-protein coupled receptor 1 family.

It localises to the cell membrane. Odorant receptor. The sequence is that of Olfactory receptor 5AU1 (OR5AU1) from Homo sapiens (Human).